A 194-amino-acid polypeptide reads, in one-letter code: Histone H1.0 (194 aa).

Methionine 1 is modified (N-acetylmethionine). A compositionally biased stretch (low complexity) spans methionine 1–alanine 11. Residues methionine 1–serine 29 are disordered. Threonine 2 is modified (N-acetylthreonine; partial; in Histone H1.0, N-terminally processed). Deamidated asparagine; partial is present on asparagine 4. Residues aspartate 24–lysine 97 form the H15 domain. Arginine 42 carries the post-translational modification Citrulline. A disordered region spans residues threonine 84–lysine 194. The residue at position 104 (serine 104) is an ADP-ribosylserine. Basic residues predominate over residues valine 105 to lysine 194.

The protein belongs to the histone H1/H5 family. Post-translationally, phosphorylated on Ser-17 in RNA edited version. ADP-ribosylated on Ser-104 in response to DNA damage.

The protein resides in the nucleus. Its subcellular location is the chromosome. In terms of biological role, histones H1 are necessary for the condensation of nucleosome chains into higher-order structures. The histones H1.0 are found in cells that are in terminal stages of differentiation or that have low rates of cell division. In Homo sapiens (Human), this protein is Histone H1.0.